A 539-amino-acid polypeptide reads, in one-letter code: Diacylglycerol O-acyltransferase 1 (539 aa).

Positions 1 to 104 (MAISDMPEST…NDGGEKIANG (104 aa)) are disordered. Residues 33-52 (TETTEVSDSNSKTTDPDSGN) are compositionally biased toward polar residues. Residues 56 to 80 (ESVRVRDSSTDESLARKSCEDDGSR) are compositionally biased toward basic and acidic residues. Helical transmembrane passes span 143–163 (HAGL…RLII), 187–207 (WPLL…FVVE), 219–239 (VVLL…VFVI), 244–264 (SVVL…LKLV), 294–314 (YPYS…TLCY), 334–354 (VKLI…INPI), and 383–403 (VWLC…AELL). The short motif at 410-416 (FYKDWWN) is the FYXDWWN motif element. The next 3 membrane-spanning stretches (helical) occupy residues 451 to 471 (GVAI…CIAV), 473 to 493 (CHIF…LVLI), and 506 to 526 (VGNM…CVLL). H465 is a catalytic residue.

Belongs to the membrane-bound acyltransferase family. Sterol o-acyltransferase subfamily.

It localises to the endoplasmic reticulum membrane. The enzyme catalyses an acyl-CoA + a 1,2-diacyl-sn-glycerol = a triacyl-sn-glycerol + CoA. Its pathway is glycerolipid metabolism; triacylglycerol biosynthesis. Its function is as follows. Major contributor to triacylglycerol (TAG) synthesis and oil accumulation in developing seeds. Catalyzes the acylation of the sn-3 hydroxy group of sn-1,2-diacylglycerol using acyl-CoA. Has a marked preference for oleoyl-CoA as substrate. This is Diacylglycerol O-acyltransferase 1 from Corylus americana (American hazelnut).